The following is a 223-amino-acid chain: MAQVTLYNIKGEKIGNIEIADEVFNVEPNLDVMWRYIDMQLTNSRAGTASTKTRGEVAGGGRKPWPQKHTGRARQGSIRAIHWRHGGVAHGPKPRNYLKRLNKKMKKLALKSALSARFQEGNLIVVSDIRFEKAQTKQMREVLKNLGIADEKVLFVLPRKEEVYENVKLSGRNIPGVKVIIADNPNNGNPVNIDGLNVYDIINSSKVVLTEGTVRKIEEVLSK.

The tract at residues 47 to 72 is disordered; the sequence is GTASTKTRGEVAGGGRKPWPQKHTGR.

Belongs to the universal ribosomal protein uL4 family. In terms of assembly, part of the 50S ribosomal subunit.

Functionally, one of the primary rRNA binding proteins, this protein initially binds near the 5'-end of the 23S rRNA. It is important during the early stages of 50S assembly. It makes multiple contacts with different domains of the 23S rRNA in the assembled 50S subunit and ribosome. In terms of biological role, forms part of the polypeptide exit tunnel. The protein is Large ribosomal subunit protein uL4 of Fervidobacterium nodosum (strain ATCC 35602 / DSM 5306 / Rt17-B1).